The chain runs to 70 residues: DNA-directed RNA polymerase subunit omega (70 aa).

This sequence belongs to the RNA polymerase subunit omega family. As to quaternary structure, the RNAP catalytic core consists of 2 alpha, 1 beta, 1 beta' and 1 omega subunit. When a sigma factor is associated with the core the holoenzyme is formed, which can initiate transcription.

The enzyme catalyses RNA(n) + a ribonucleoside 5'-triphosphate = RNA(n+1) + diphosphate. Promotes RNA polymerase assembly. Latches the N- and C-terminal regions of the beta' subunit thereby facilitating its interaction with the beta and alpha subunits. The sequence is that of DNA-directed RNA polymerase subunit omega from Staphylococcus epidermidis (strain ATCC 12228 / FDA PCI 1200).